The primary structure comprises 554 residues: MSEAEARPTNFIRQIIDEDLASGKHTTVHTRFPPEPNGYLHIGHAKSICLNFGIAQDYKGQCNLRFDDTNPVKEDIEYVDSIKNDVEWLGFHWSGNVRYSSDYFDQLHAYAIELINKGLAYVDELTPEQIREYRGTLTQPGKNSPYRDRSVEENLALFEKMRTGGFEEGKACLRAKIDMASPFIVMRDPVLYRIKFAEHHQTGNKWCIYPMYDFTHCISDALEGITHSLCTLEFQDNRRLYDWVLDNITIPVHPRQYEFSRLNLEYTVMSKRKLNLLVTDKHVEGWDDPRMPTISGLRRRGYTAASIREFCKRIGVTKQDNTIEMASLESCIREDLNENAPRAMAVIDPVKLVIENYQGEGEMVTMPNHPNKPEMGSRQVPFSGEIWIDRADFREEANKQYKRLVLGKEVRLRNAYVIKAERVEKDAEGNITTIFCTYDADTLSKDPADGRKVKGVIHWVSAAHALPVEIRLYDRLFSVPNPGAADDFLSVINPESLVIKQGFAEPSLKDAVAGKAFQFEREGYFCLDSRHSTAEKPVFNRTVGLRDTWAKVGE.

The short motif at 34–44 (PEPNGYLHIGH) is the 'HIGH' region element. ATP-binding positions include 35-37 (EPN) and 41-47 (HIGHAKS). L-glutamine is bound by residues aspartate 67 and tyrosine 212. ATP contacts are provided by residues threonine 231, 261-262 (RL), and 269-271 (MSK). The 'KMSKS' region signature appears at 268–272 (VMSKR). The interval 317–324 (TKQDNTIE) is interaction with tRNA.

This sequence belongs to the class-I aminoacyl-tRNA synthetase family. In terms of assembly, monomer.

The protein localises to the cytoplasm. It carries out the reaction tRNA(Gln) + L-glutamine + ATP = L-glutaminyl-tRNA(Gln) + AMP + diphosphate. In Escherichia coli O127:H6 (strain E2348/69 / EPEC), this protein is Glutamine--tRNA ligase.